The sequence spans 313 residues: Aspartate carbamoyltransferase catalytic subunit (313 aa).

Carbamoyl phosphate contacts are provided by Arg-59 and Thr-60. L-aspartate is bound at residue Lys-87. Carbamoyl phosphate contacts are provided by Arg-109, His-137, and Gln-140. L-aspartate is bound by residues Arg-170 and Arg-224. Carbamoyl phosphate-binding residues include Gly-265 and Pro-266.

It belongs to the aspartate/ornithine carbamoyltransferase superfamily. ATCase family. In terms of assembly, heterododecamer (2C3:3R2) of six catalytic PyrB chains organized as two trimers (C3), and six regulatory PyrI chains organized as three dimers (R2).

It catalyses the reaction carbamoyl phosphate + L-aspartate = N-carbamoyl-L-aspartate + phosphate + H(+). It functions in the pathway pyrimidine metabolism; UMP biosynthesis via de novo pathway; (S)-dihydroorotate from bicarbonate: step 2/3. Functionally, catalyzes the condensation of carbamoyl phosphate and aspartate to form carbamoyl aspartate and inorganic phosphate, the committed step in the de novo pyrimidine nucleotide biosynthesis pathway. The chain is Aspartate carbamoyltransferase catalytic subunit from Rhizobium meliloti (strain 1021) (Ensifer meliloti).